A 497-amino-acid chain; its full sequence is Homeotic protein empty spiracles (497 aa).

3 disordered regions span residues N34–P117, S161–P262, and N441–H497. Residues D35–P50 show a composition bias toward polar residues. Positions Q51–P68 are enriched in pro residues. Residues P96 to P117 show a composition bias toward low complexity. Polar residues predominate over residues S161–M176. Composition is skewed to low complexity over residues P208–Q239 and P248–P262. Residues P391 to Q450 constitute a DNA-binding region (homeobox). The span at G470 to H497 shows a compositional bias: acidic residues.

It belongs to the EMX homeobox family.

It is found in the nucleus. Its function is as follows. Acts as a homeotic selector gene controlling antennal and mandibular segment identity. This chain is Homeotic protein empty spiracles (ems), found in Drosophila melanogaster (Fruit fly).